Reading from the N-terminus, the 216-residue chain is Minor fimbrial subunit HifD (216 aa).

Residues 1-19 (MQKTPKKLTALCHQQSTAS) form the signal peptide. The N-palmitoyl cysteine moiety is linked to residue C20. C20 carries the S-diacylglycerol cysteine lipid modification. The segment at 159-180 (PINVDGSQANSEKAPDTGKEQN) is disordered.

This sequence belongs to the fimbrial protein family.

It is found in the cell membrane. Its subcellular location is the fimbrium. In terms of biological role, may be a minor structural protein required for pilus biogenesis. The sequence is that of Minor fimbrial subunit HifD (hifD) from Haemophilus influenzae.